A 175-amino-acid polypeptide reads, in one-letter code: Clathrin-associated protein AP-3 complex component APS3 (175 aa).

The protein belongs to the adaptor complexes small subunit family. As to quaternary structure, adaptor protein complex 3 (AP-3) is a heterotetramer composed of 2 large adaptins, a medium adaptin and a small adaptin.

It localises to the golgi apparatus. The protein resides in the cytoplasmic vesicle membrane. Functionally, part of the AP-3 complex, an adapter-related complex which is not clathrin-associated. The complex is associated with the Golgi region as well as more peripheral structures. It facilitates the budding of vesicles from the Golgi membrane. Involved in vacuolar trafficking and contributes to hyphal growth and pathogenesis. The polypeptide is Clathrin-associated protein AP-3 complex component APS3 (APS3) (Candida albicans (strain SC5314 / ATCC MYA-2876) (Yeast)).